A 333-amino-acid chain; its full sequence is Putative F-box protein At4g11580 (333 aa).

Residues 11–58 (VSEWADLNKDILELIFNKLDVMDITMGASRVCISWFLASHNKTLWNTV) form the F-box domain.

This chain is Putative F-box protein At4g11580, found in Arabidopsis thaliana (Mouse-ear cress).